The sequence spans 489 residues: Glycogen synthase (489 aa).

An ADP-alpha-D-glucose-binding site is contributed by R20.

Belongs to the glycosyltransferase 1 family. Bacterial/plant glycogen synthase subfamily.

The catalysed reaction is [(1-&gt;4)-alpha-D-glucosyl](n) + ADP-alpha-D-glucose = [(1-&gt;4)-alpha-D-glucosyl](n+1) + ADP + H(+). It functions in the pathway glycan biosynthesis; glycogen biosynthesis. Its function is as follows. Synthesizes alpha-1,4-glucan chains using ADP-glucose. The polypeptide is Glycogen synthase (Chlorobium limicola (strain DSM 245 / NBRC 103803 / 6330)).